Reading from the N-terminus, the 715-residue chain is Fatty acid oxidation complex subunit alpha (715 aa).

Positions 1–189 are enoyl-CoA hydratase/isomerase; the sequence is MIYQGETLSV…KVGAIDAVVA (189 aa). Residue Asp296 participates in substrate binding. The 3-hydroxyacyl-CoA dehydrogenase stretch occupies residues 311–715; sequence AKATRHAAVL…EMAAQGKTFY (405 aa). NAD(+)-binding positions include Met325, Asp344, 401-403, Lys408, and Ser430; that span reads VVE. His451 acts as the For 3-hydroxyacyl-CoA dehydrogenase activity in catalysis. Asn454 is an NAD(+) binding site. Substrate-binding residues include Asn501 and Tyr661.

It in the N-terminal section; belongs to the enoyl-CoA hydratase/isomerase family. In the C-terminal section; belongs to the 3-hydroxyacyl-CoA dehydrogenase family. As to quaternary structure, heterotetramer of two alpha chains (FadB) and two beta chains (FadA).

The enzyme catalyses a (3S)-3-hydroxyacyl-CoA + NAD(+) = a 3-oxoacyl-CoA + NADH + H(+). It catalyses the reaction a (3S)-3-hydroxyacyl-CoA = a (2E)-enoyl-CoA + H2O. It carries out the reaction a 4-saturated-(3S)-3-hydroxyacyl-CoA = a (3E)-enoyl-CoA + H2O. The catalysed reaction is (3S)-3-hydroxybutanoyl-CoA = (3R)-3-hydroxybutanoyl-CoA. The enzyme catalyses a (3Z)-enoyl-CoA = a 4-saturated (2E)-enoyl-CoA. It catalyses the reaction a (3E)-enoyl-CoA = a 4-saturated (2E)-enoyl-CoA. Its pathway is lipid metabolism; fatty acid beta-oxidation. Functionally, involved in the aerobic and anaerobic degradation of long-chain fatty acids via beta-oxidation cycle. Catalyzes the formation of 3-oxoacyl-CoA from enoyl-CoA via L-3-hydroxyacyl-CoA. It can also use D-3-hydroxyacyl-CoA and cis-3-enoyl-CoA as substrate. This chain is Fatty acid oxidation complex subunit alpha, found in Aeromonas salmonicida (strain A449).